The sequence spans 456 residues: Transcription factor bHLH62 (456 aa).

The span at 159–185 (RTNSPFPINNEPPITTNEKMPRVSSSP) shows a compositional bias: polar residues. Positions 159–254 (RTNSPFPINN…KTKSIDPYKD (96 aa)) are disordered. Basic and acidic residues predominate over residues 223–254 (KEIEEKEDSDPKRCKKSEENGDKTKSIDPYKD). One can recognise a bHLH domain in the interval 264-314 (QATDSHSLAERVRREKISERMKLLQDLVPGCNKVTGKALMLDEIINYVQSL).

In terms of assembly, homodimer. In terms of tissue distribution, expressed constitutively in roots, leaves, stems, and flowers.

Its subcellular location is the nucleus. In Arabidopsis thaliana (Mouse-ear cress), this protein is Transcription factor bHLH62 (BHLH62).